The sequence spans 460 residues: GTPase Der (460 aa).

EngA-type G domains follow at residues 3–167 and 189–364; these read FTFA…PEPD and IRVA…ATWN. Residues 9 to 16, 56 to 60, 119 to 122, 195 to 202, 242 to 246, and 307 to 310 each bind GTP; these read GRPNVGKS, DTAGL, NKSE, GRPNAGKS, and NKWD. Residues 365 to 449 form the KH-like domain; that stretch reads RRVPTAALNR…PVRIMLREKA (85 aa).

The protein belongs to the TRAFAC class TrmE-Era-EngA-EngB-Septin-like GTPase superfamily. EngA (Der) GTPase family. In terms of assembly, associates with the 50S ribosomal subunit.

Functionally, GTPase that plays an essential role in the late steps of ribosome biogenesis. This chain is GTPase Der, found in Rhodopseudomonas palustris (strain BisA53).